The sequence spans 202 residues: Small ribosomal subunit protein uS4 (202 aa).

The interval 15 to 42 is disordered; the sequence is LGDLPGLTRKAAKRSYPPGQHGQARRKR. An S4 RNA-binding domain is found at 90 to 152; sequence NRLDNVCFRL…KCSKQLAEGN (63 aa).

The protein belongs to the universal ribosomal protein uS4 family. Part of the 30S ribosomal subunit. Contacts protein S5. The interaction surface between S4 and S5 is involved in control of translational fidelity.

In terms of biological role, one of the primary rRNA binding proteins, it binds directly to 16S rRNA where it nucleates assembly of the body of the 30S subunit. With S5 and S12 plays an important role in translational accuracy. This chain is Small ribosomal subunit protein uS4, found in Parasynechococcus marenigrum (strain WH8102).